We begin with the raw amino-acid sequence, 377 residues long: Flagellin (377 aa).

This sequence belongs to the bacterial flagellin family.

The protein localises to the secreted. The protein resides in the bacterial flagellum. Its function is as follows. Flagellin is the subunit protein which polymerizes to form the filaments of bacterial flagella. This Clostridium tyrobutyricum protein is Flagellin (fla).